Here is a 546-residue protein sequence, read N- to C-terminus: Interleukin-20 receptor subunit alpha (546 aa).

Residues 1-32 (MHTPGTPAPGHPDPPPLLLLTLLLLLAASGRA) form the signal peptide. Residues 33–253 (VPCVFCGLPK…EVQTSAWKAK (221 aa)) lie on the Extracellular side of the membrane. Fibronectin type-III domains lie at 42–138 (KPTN…FLET) and 139–245 (QVSP…TLEV). Asparagine 45, asparagine 86, asparagine 94, asparagine 185, and asparagine 203 each carry an N-linked (GlcNAc...) asparagine glycan. Cysteine 90 and cysteine 98 are joined by a disulfide. Cysteine 218 and cysteine 239 are oxidised to a cystine. Residues 254 to 274 (VIFWYVFLTSVIVFLFSAIGY) traverse the membrane as a helical segment. Over 275–546 (LVYRYIHVGK…EWGLHVQMES (272 aa)) the chain is Cytoplasmic.

It belongs to the type II cytokine receptor family. As to quaternary structure, heterodimer with IL20RB and heterodimer with IL10RB.

Its subcellular location is the membrane. In terms of biological role, the IL20RA/IL20RB dimer is a receptor for IL19, IL20 and IL24. The IL20RA/IL10RB dimer is a receptor for IL26. This Mus musculus (Mouse) protein is Interleukin-20 receptor subunit alpha (Il20ra).